The chain runs to 184 residues: Cysteine-rich atrial secretory protein (184 aa).

The signal sequence occupies residues 1–26 (MATFQAHFFAAVMCVGVLGLSKLCGA). Cystine bridges form between Cys29–Cys34, Cys65–Cys111, Cys75–Cys82, Cys123–Cys155, and Cys135–Cys144. Residue Asn74 is glycosylated (N-linked (GlcNAc...) asparagine).

Post-translationally, N-glycosylated. In terms of tissue distribution, highly expressed in atrium. Moderately expressed in the pericardium, pulmonary vein, nephridium, arteria anterior, ovotestis and connective tissue. Low expression found in intestine, lung plexus, diaphragm, subesophageal ganglion, ventricle and digestive gland. Very low expression found in columellar retractor, pedal nerves and cerebral ganglion. Not expressed in hemocytes.

It localises to the secreted. In Achatina achatina (Giant Ghana snail), this protein is Cysteine-rich atrial secretory protein.